Consider the following 181-residue polypeptide: uncharacterized protein (181 aa).

A helical membrane pass occupies residues 133–153 (MCVCVHVCACVYVCMCVLVCM).

The protein localises to the membrane. This is an uncharacterized protein from Homo sapiens (Human).